A 293-amino-acid chain; its full sequence is Pyridoxal 5'-phosphate synthase subunit PdxS (293 aa).

Asp-23 lines the D-ribose 5-phosphate pocket. Lys-80 acts as the Schiff-base intermediate with D-ribose 5-phosphate in catalysis. Residue Gly-152 participates in D-ribose 5-phosphate binding. A D-glyceraldehyde 3-phosphate-binding site is contributed by Arg-164. Residues Gly-213 and Gly-234–Ser-235 contribute to the D-ribose 5-phosphate site.

Belongs to the PdxS/SNZ family. As to quaternary structure, in the presence of PdxT, forms a dodecamer of heterodimers.

The enzyme catalyses aldehydo-D-ribose 5-phosphate + D-glyceraldehyde 3-phosphate + L-glutamine = pyridoxal 5'-phosphate + L-glutamate + phosphate + 3 H2O + H(+). The protein operates within cofactor biosynthesis; pyridoxal 5'-phosphate biosynthesis. Catalyzes the formation of pyridoxal 5'-phosphate from ribose 5-phosphate (RBP), glyceraldehyde 3-phosphate (G3P) and ammonia. The ammonia is provided by the PdxT subunit. Can also use ribulose 5-phosphate and dihydroxyacetone phosphate as substrates, resulting from enzyme-catalyzed isomerization of RBP and G3P, respectively. The protein is Pyridoxal 5'-phosphate synthase subunit PdxS of Roseiflexus castenholzii (strain DSM 13941 / HLO8).